Reading from the N-terminus, the 1017-residue chain is Semaphorin-6D (1017 aa).

An N-terminal signal peptide occupies residues Met-1–Ala-20. Residues Val-21–Asn-606 are Extracellular-facing. The Sema domain maps to Asp-27–Leu-512. An N-linked (GlcNAc...) asparagine glycan is attached at Asn-51. 4 disulfides stabilise this stretch: Cys-108-Cys-118, Cys-136-Cys-145, Cys-259-Cys-370, and Cys-284-Cys-329. A glycan (N-linked (GlcNAc...) asparagine) is linked at Asn-283. N-linked (GlcNAc...) asparagine glycosylation is found at Asn-435 and Asn-461. Intrachain disulfides connect Cys-477–Cys-506, Cys-515–Cys-533, Cys-521–Cys-568, and Cys-525–Cys-541. One can recognise a PSI domain in the interval Arg-514–His-569. A helical membrane pass occupies residues Val-607–Val-627. Topologically, residues Tyr-628 to Tyr-1017 are cytoplasmic. Residues Ser-667, Ser-678, and Ser-688 each carry the phosphoserine modification. Disordered regions lie at residues Ser-688–Glu-719, Ala-731–Pro-769, Thr-783–Asp-818, and Leu-873–Ser-912. At Thr-717 the chain carries Phosphothreonine. Positions Ser-734–Thr-749 are enriched in basic and acidic residues. Residues Ser-875, Ser-901, and Ser-927 each carry the phosphoserine modification. Residues Ser-875–Thr-886 show a composition bias toward polar residues. The span at Leu-965–Leu-981 shows a compositional bias: polar residues. The interval Leu-965–Tyr-1017 is disordered.

This sequence belongs to the semaphorin family.

It is found in the cell membrane. Its function is as follows. Shows growth cone collapsing activity on dorsal root ganglion (DRG) neurons in vitro. May be a stop signal for the DRG neurons in their target areas, and possibly also for other neurons. May also be involved in the maintenance and remodeling of neuronal connections. Ligand of TREM2 with PLXNA1 as coreceptor in dendritic cells, plays a role in the generation of immune responses and skeletal homeostasis. This chain is Semaphorin-6D (SEMA6D), found in Pongo abelii (Sumatran orangutan).